Here is a 446-residue protein sequence, read N- to C-terminus: Exodeoxyribonuclease 7 large subunit (446 aa).

It belongs to the XseA family. In terms of assembly, heterooligomer composed of large and small subunits.

It localises to the cytoplasm. The catalysed reaction is Exonucleolytic cleavage in either 5'- to 3'- or 3'- to 5'-direction to yield nucleoside 5'-phosphates.. Its function is as follows. Bidirectionally degrades single-stranded DNA into large acid-insoluble oligonucleotides, which are then degraded further into small acid-soluble oligonucleotides. The sequence is that of Exodeoxyribonuclease 7 large subunit from Streptococcus agalactiae serotype III (strain NEM316).